Here is a 226-residue protein sequence, read N- to C-terminus: Low-molecular weight cobalt-containing nitrile hydratase subunit beta (226 aa).

Positions 1–22 (MDGIHDLGGRAGLGPIKPESDE) are disordered.

The protein belongs to the nitrile hydratase subunit beta family. As to quaternary structure, heterodimer of an alpha and a beta chain.

The enzyme catalyses an aliphatic primary amide = an aliphatic nitrile + H2O. In terms of biological role, NHase catalyzes the hydration of various nitrile compounds to the corresponding amides. In Rhodococcus rhodochrous, this protein is Low-molecular weight cobalt-containing nitrile hydratase subunit beta.